The following is a 110-amino-acid chain: uncharacterized protein (110 aa).

It to M.jannaschii MJ0123 and MJ1213.

This is an uncharacterized protein from Aquifex aeolicus (strain VF5).